The chain runs to 382 residues: Mannitol-1-phosphate 5-dehydrogenase (382 aa).

3–14 (ALHFGAGNIGRG) contributes to the NAD(+) binding site.

This sequence belongs to the mannitol dehydrogenase family.

The catalysed reaction is D-mannitol 1-phosphate + NAD(+) = beta-D-fructose 6-phosphate + NADH + H(+). The protein is Mannitol-1-phosphate 5-dehydrogenase of Salmonella paratyphi A (strain ATCC 9150 / SARB42).